The primary structure comprises 371 residues: Anhydro-N-acetylmuramic acid kinase (371 aa).

An ATP-binding site is contributed by 12-20 (GTVLDGNID).

It belongs to the anhydro-N-acetylmuramic acid kinase family.

The catalysed reaction is 1,6-anhydro-N-acetyl-beta-muramate + ATP + H2O = N-acetyl-D-muramate 6-phosphate + ADP + H(+). The protein operates within amino-sugar metabolism; 1,6-anhydro-N-acetylmuramate degradation. It participates in cell wall biogenesis; peptidoglycan recycling. In terms of biological role, catalyzes the specific phosphorylation of 1,6-anhydro-N-acetylmuramic acid (anhMurNAc) with the simultaneous cleavage of the 1,6-anhydro ring, generating MurNAc-6-P. Is required for the utilization of anhMurNAc either imported from the medium or derived from its own cell wall murein, and thus plays a role in cell wall recycling. This chain is Anhydro-N-acetylmuramic acid kinase, found in Rhizobium rhizogenes (strain K84 / ATCC BAA-868) (Agrobacterium radiobacter).